Here is a 164-residue protein sequence, read N- to C-terminus: V-type proton ATPase 16 kDa proteolipid subunit (164 aa).

The Lumenal portion of the chain corresponds to 1–9; it reads MASFSGDET. Residues 10–32 traverse the membrane as a helical segment; the sequence is APFFGFLGAAAALVFSCMGAAYG. At 33–54 the chain is on the cytoplasmic side; the sequence is TAKSGVGVASMGVMRPELVMKS. The helical transmembrane segment at 55 to 75 threads the bilayer; that stretch reads IVPVVMAGVLGIYGLIIAVII. At 76-94 the chain is on the lumenal side; it reads STGINPKAKSYYLFDGYAH. The helical transmembrane segment at 95 to 116 threads the bilayer; the sequence is LSSGLACGLAGLSAGMAIGIVG. Over 117-128 the chain is Cytoplasmic; that stretch reads DAGVRANAQQPK. The helical transmembrane segment at 129–154 threads the bilayer; sequence LFVGMILILIFAEALALYGLIVGIIL. Over 155 to 164 the chain is Lumenal; the sequence is SSRAGQSRAD.

Belongs to the V-ATPase proteolipid subunit family. V-ATPase is a heteromultimeric enzyme composed of a peripheral catalytic V1 complex (main components: subunits A, B, C, D, E, and F) attached to an integral membrane V0 proton pore complex (main component: the proteolipid protein; which is present as a hexamer that forms the proton-conducting pore).

The protein resides in the vacuole membrane. Functionally, proton-conducting pore forming subunit of the membrane integral V0 complex of vacuolar ATPase. V-ATPase is responsible for acidifying a variety of intracellular compartments in eukaryotic cells. This chain is V-type proton ATPase 16 kDa proteolipid subunit, found in Vigna radiata var. radiata (Mung bean).